A 444-amino-acid polypeptide reads, in one-letter code: Ribulose bisphosphate carboxylase large chain (444 aa).

K7 carries the N6,N6,N6-trimethyllysine modification. Positions 116 and 166 each coordinate substrate. K168 serves as the catalytic Proton acceptor. Residue K170 participates in substrate binding. Mg(2+) is bound by residues K194, D196, and E197. K194 is modified (N6-carboxylysine). Residue H287 is the Proton acceptor of the active site. The substrate site is built by R288, H320, and S372.

It belongs to the RuBisCO large chain family. Type I subfamily. In terms of assembly, heterohexadecamer of 8 large chains and 8 small chains; disulfide-linked. The disulfide link is formed within the large subunit homodimers. Mg(2+) serves as cofactor. Post-translationally, the disulfide bond which can form in the large chain dimeric partners within the hexadecamer appears to be associated with oxidative stress and protein turnover.

The protein resides in the plastid. Its subcellular location is the chloroplast. The enzyme catalyses 2 (2R)-3-phosphoglycerate + 2 H(+) = D-ribulose 1,5-bisphosphate + CO2 + H2O. It catalyses the reaction D-ribulose 1,5-bisphosphate + O2 = 2-phosphoglycolate + (2R)-3-phosphoglycerate + 2 H(+). Its function is as follows. RuBisCO catalyzes two reactions: the carboxylation of D-ribulose 1,5-bisphosphate, the primary event in carbon dioxide fixation, as well as the oxidative fragmentation of the pentose substrate in the photorespiration process. Both reactions occur simultaneously and in competition at the same active site. The protein is Ribulose bisphosphate carboxylase large chain of Watsonia angusta.